A 187-amino-acid chain; its full sequence is Dihydrofolate reductase type A10 (187 aa).

The DHFR domain maps to 2–174; that stretch reads NISLIFANEL…YSLSIDKFVR (173 aa).

It belongs to the dihydrofolate reductase family. As to quaternary structure, homodimer.

The enzyme catalyses (6S)-5,6,7,8-tetrahydrofolate + NADP(+) = 7,8-dihydrofolate + NADPH + H(+). The protein operates within cofactor biosynthesis; tetrahydrofolate biosynthesis; 5,6,7,8-tetrahydrofolate from 7,8-dihydrofolate: step 1/1. Functionally, key enzyme in folate metabolism. Catalyzes an essential reaction for de novo glycine and purine synthesis, and for DNA precursor synthesis. The protein is Dihydrofolate reductase type A10 (dfrA10) of Escherichia coli.